The following is a 92-amino-acid chain: Ictacalcin (92 aa).

EF-hand domains lie at 12–47 (ISTFHKYSGKEGDKCTLTKGELKDLLTKELGGAFGN) and 49–84 (SDQATLDKIFKDLDTNADGVVDFQEYATMVACTTML). Positions 27, 32, 62, 64, 66, and 73 each coordinate Ca(2+).

Belongs to the S-100 family. Abundant in epithelial cells of olfactory rosette, barbel, skin and gill but not brain or muscle.

In terms of biological role, plays an important role in catfish calcium homeostasis. The protein is Ictacalcin of Ictalurus punctatus (Channel catfish).